Consider the following 295-residue polypeptide: Carbapenem-hydrolyzing beta-lactamase transcriptional activator (295 aa).

The 58-residue stretch at 5-62 folds into the HTH lysR-type domain; sequence LPLNALRAFEASARYLNFTKAGLELHVSQAAVSQQVRTLEQMLGVALFTRVPRGLQLT. Positions 22–41 form a DNA-binding region, H-T-H motif; the sequence is FTKAGLELHVSQAAVSQQVR.

This sequence belongs to the LysR transcriptional regulatory family.

Functionally, this protein is a positive regulator of gene expression of carbapenem-hydrolyzing beta-lactamase (NmcA). The polypeptide is Carbapenem-hydrolyzing beta-lactamase transcriptional activator (nmcR) (Enterobacter cloacae).